The sequence spans 158 residues: Small ribosomal subunit protein uS7 (158 aa).

It belongs to the universal ribosomal protein uS7 family. Part of the 30S ribosomal subunit. Contacts proteins S9 and S11.

In terms of biological role, one of the primary rRNA binding proteins, it binds directly to 16S rRNA where it nucleates assembly of the head domain of the 30S subunit. Is located at the subunit interface close to the decoding center, probably blocks exit of the E-site tRNA. The sequence is that of Small ribosomal subunit protein uS7 from Wolbachia pipientis subsp. Culex pipiens (strain wPip).